The following is a 310-amino-acid chain: 4-hydroxyproline 2-epimerase (310 aa).

The active-site Proton acceptor is the Cys88. Residues 89–90 (GH), His208, and Asp232 contribute to the substrate site. Cys236 serves as the catalytic Proton donor. Residue 237–238 (GT) participates in substrate binding.

Belongs to the proline racemase family.

The catalysed reaction is trans-4-hydroxy-L-proline = cis-4-hydroxy-D-proline. In terms of biological role, catalyzes the epimerization of trans-4-hydroxy-L-proline (t4LHyp) to cis-4-hydroxy-D-proline (c4DHyp). Is likely involved in a degradation pathway that converts t4LHyp to alpha-ketoglutarate. Displays no proline racemase activity. The protein is 4-hydroxyproline 2-epimerase of Acinetobacter baumannii (strain AYE).